The chain runs to 129 residues: Trefoil factor 2 (129 aa).

An N-terminal signal peptide occupies residues 1–23 (MGRRDAQLLAALLVLGLCALAGS). 2 consecutive P-type domains span residues 29–73 (CQCS…FHPL) and 79–122 (DQCV…FFPK). Disulfide bonds link Cys-29-Cys-127, Cys-31-Cys-58, Cys-42-Cys-57, Cys-52-Cys-69, Cys-81-Cys-107, Cys-91-Cys-106, and Cys-101-Cys-118.

In terms of tissue distribution, stomach.

The protein localises to the secreted. In terms of biological role, inhibits gastrointestinal motility and gastric acid secretion. Could function as a structural component of gastric mucus, possibly by stabilizing glycoproteins in the mucus gel through interactions with carbohydrate side chains. The sequence is that of Trefoil factor 2 (TFF2) from Homo sapiens (Human).